A 137-amino-acid polypeptide reads, in one-letter code: Large ribosomal subunit protein uL16 (137 aa).

It belongs to the universal ribosomal protein uL16 family. Part of the 50S ribosomal subunit.

Binds 23S rRNA and is also seen to make contacts with the A and possibly P site tRNAs. The polypeptide is Large ribosomal subunit protein uL16 (Bradyrhizobium sp. (strain ORS 278)).